We begin with the raw amino-acid sequence, 157 residues long: Small ribosomal subunit protein uS7 (157 aa).

The protein belongs to the universal ribosomal protein uS7 family. In terms of assembly, part of the 30S ribosomal subunit. Contacts proteins S9 and S11.

In terms of biological role, one of the primary rRNA binding proteins, it binds directly to 16S rRNA where it nucleates assembly of the head domain of the 30S subunit. Is located at the subunit interface close to the decoding center, probably blocks exit of the E-site tRNA. The protein is Small ribosomal subunit protein uS7 of Rhodopirellula baltica (strain DSM 10527 / NCIMB 13988 / SH1).